Reading from the N-terminus, the 307-residue chain is N-acetylmuramic acid 6-phosphate etherase (307 aa).

In terms of domain architecture, SIS spans Thr59 to Lys222. Glu87 acts as the Proton donor in catalysis. The active site involves Glu118.

It belongs to the GCKR-like family. MurNAc-6-P etherase subfamily. In terms of assembly, homodimer.

It catalyses the reaction N-acetyl-D-muramate 6-phosphate + H2O = N-acetyl-D-glucosamine 6-phosphate + (R)-lactate. The protein operates within amino-sugar metabolism; N-acetylmuramate degradation. Its function is as follows. Specifically catalyzes the cleavage of the D-lactyl ether substituent of MurNAc 6-phosphate, producing GlcNAc 6-phosphate and D-lactate. The sequence is that of N-acetylmuramic acid 6-phosphate etherase from Trichormus variabilis (strain ATCC 29413 / PCC 7937) (Anabaena variabilis).